A 316-amino-acid chain; its full sequence is Large ribosomal subunit protein uL10 (316 aa).

Residues 282–316 (ASAAKADEPKKEEAKKVEEEEEEEEDGFMGFGMFD) are disordered. A compositionally biased stretch (basic and acidic residues) spans 286 to 299 (KADEPKKEEAKKVE).

Belongs to the universal ribosomal protein uL10 family. In terms of assembly, P0 forms a pentameric complex by interaction with dimers of P1 and P2. Post-translationally, phosphorylated.

In terms of biological role, ribosomal protein P0 is the functional equivalent of E.coli protein L10. This is Large ribosomal subunit protein uL10 (RPLP0) from Plasmodium falciparum (isolate 7G8).